We begin with the raw amino-acid sequence, 357 residues long: UDP-N-acetylglucosamine--N-acetylmuramyl-(pentapeptide) pyrophosphoryl-undecaprenol N-acetylglucosamine transferase (357 aa).

UDP-N-acetyl-alpha-D-glucosamine is bound by residues 15–17 (SGG), Asn125, Ser190, and Gln290.

Belongs to the glycosyltransferase 28 family. MurG subfamily.

The protein localises to the cell inner membrane. The catalysed reaction is di-trans,octa-cis-undecaprenyl diphospho-N-acetyl-alpha-D-muramoyl-L-alanyl-D-glutamyl-meso-2,6-diaminopimeloyl-D-alanyl-D-alanine + UDP-N-acetyl-alpha-D-glucosamine = di-trans,octa-cis-undecaprenyl diphospho-[N-acetyl-alpha-D-glucosaminyl-(1-&gt;4)]-N-acetyl-alpha-D-muramoyl-L-alanyl-D-glutamyl-meso-2,6-diaminopimeloyl-D-alanyl-D-alanine + UDP + H(+). Its pathway is cell wall biogenesis; peptidoglycan biosynthesis. Cell wall formation. Catalyzes the transfer of a GlcNAc subunit on undecaprenyl-pyrophosphoryl-MurNAc-pentapeptide (lipid intermediate I) to form undecaprenyl-pyrophosphoryl-MurNAc-(pentapeptide)GlcNAc (lipid intermediate II). The polypeptide is UDP-N-acetylglucosamine--N-acetylmuramyl-(pentapeptide) pyrophosphoryl-undecaprenol N-acetylglucosamine transferase (Chlamydia pneumoniae (Chlamydophila pneumoniae)).